The following is a 949-amino-acid chain: Bifunctional uridylyltransferase/uridylyl-removing enzyme (949 aa).

The uridylyltransferase stretch occupies residues 1–377 (MARHETSFPE…RFRNRVRKIP (377 aa)). The interval 378-733 (GTLDFVDDGG…VRTHDFHAIT (356 aa)) is uridylyl-removing. An HD domain is found at 494-610 (VDEHLLRAVD…VDFAERVQSL (117 aa)). 2 consecutive ACT domains span residues 734–815 (EITV…DVIA) and 845–926 (VIEV…ERMP). Residues 925 to 949 (MPSGIIAPTPVPRASHGSKATKAET) form a disordered region.

This sequence belongs to the GlnD family. It depends on Mg(2+) as a cofactor.

It catalyses the reaction [protein-PII]-L-tyrosine + UTP = [protein-PII]-uridylyl-L-tyrosine + diphosphate. The catalysed reaction is [protein-PII]-uridylyl-L-tyrosine + H2O = [protein-PII]-L-tyrosine + UMP + H(+). Uridylyltransferase (UTase) activity is inhibited by glutamine, while glutamine activates uridylyl-removing (UR) activity. Modifies, by uridylylation and deuridylylation, the PII regulatory proteins (GlnB and homologs), in response to the nitrogen status of the cell that GlnD senses through the glutamine level. Under low glutamine levels, catalyzes the conversion of the PII proteins and UTP to PII-UMP and PPi, while under higher glutamine levels, GlnD hydrolyzes PII-UMP to PII and UMP (deuridylylation). Thus, controls uridylylation state and activity of the PII proteins, and plays an important role in the regulation of nitrogen fixation and metabolism. In Sinorhizobium medicae (strain WSM419) (Ensifer medicae), this protein is Bifunctional uridylyltransferase/uridylyl-removing enzyme.